The following is a 177-amino-acid chain: Large ribosomal subunit protein uL6 (177 aa).

This sequence belongs to the universal ribosomal protein uL6 family. Part of the 50S ribosomal subunit.

Functionally, this protein binds to the 23S rRNA, and is important in its secondary structure. It is located near the subunit interface in the base of the L7/L12 stalk, and near the tRNA binding site of the peptidyltransferase center. The polypeptide is Large ribosomal subunit protein uL6 (Yersinia pseudotuberculosis serotype O:1b (strain IP 31758)).